A 512-amino-acid chain; its full sequence is Maturase K (512 aa).

This sequence belongs to the intron maturase 2 family. MatK subfamily.

It is found in the plastid. Its subcellular location is the chloroplast. Its function is as follows. Usually encoded in the trnK tRNA gene intron. Probably assists in splicing its own and other chloroplast group II introns. The sequence is that of Maturase K from Daucus carota (Wild carrot).